We begin with the raw amino-acid sequence, 131 residues long: Large ribosomal subunit protein bL17 (131 aa).

Belongs to the bacterial ribosomal protein bL17 family. As to quaternary structure, part of the 50S ribosomal subunit. Contacts protein L32.

This Thermotoga neapolitana (strain ATCC 49049 / DSM 4359 / NBRC 107923 / NS-E) protein is Large ribosomal subunit protein bL17.